Here is a 392-residue protein sequence, read N- to C-terminus: NAD(P)H-quinone oxidoreductase subunit H, chloroplastic (392 aa).

It belongs to the complex I 49 kDa subunit family. In terms of assembly, NDH is composed of at least 16 different subunits, 5 of which are encoded in the nucleus.

It localises to the plastid. The protein resides in the chloroplast thylakoid membrane. It carries out the reaction a plastoquinone + NADH + (n+1) H(+)(in) = a plastoquinol + NAD(+) + n H(+)(out). The enzyme catalyses a plastoquinone + NADPH + (n+1) H(+)(in) = a plastoquinol + NADP(+) + n H(+)(out). NDH shuttles electrons from NAD(P)H:plastoquinone, via FMN and iron-sulfur (Fe-S) centers, to quinones in the photosynthetic chain and possibly in a chloroplast respiratory chain. The immediate electron acceptor for the enzyme in this species is believed to be plastoquinone. Couples the redox reaction to proton translocation, and thus conserves the redox energy in a proton gradient. In Marchantia polymorpha (Common liverwort), this protein is NAD(P)H-quinone oxidoreductase subunit H, chloroplastic.